We begin with the raw amino-acid sequence, 130 residues long: Protein ApaG (130 aa).

The ApaG domain occupies Lys3–Arg127.

This is Protein ApaG from Methylobacterium sp. (strain 4-46).